The primary structure comprises 69 residues: MKLLTVAFSLLLLGQVHASPLVLDKRSSCQLGDVWDLNAADAACSASCAIQHGDKHGGHCDKNKVCVCN.

The first 18 residues, 1 to 18 (MKLLTVAFSLLLLGQVHA), serve as a signal peptide directing secretion. Positions 19–26 (SPLVLDKR) are excised as a propeptide. Disulfide bonds link Cys29/Cys60, Cys44/Cys66, and Cys48/Cys68.

The protein belongs to the invertebrate defensin family.

Its subcellular location is the secreted. The protein localises to the target cell membrane. In terms of biological role, shows antibacterial activity against numerous Gram-positive bacteria. It selectively inhibits peptidoglycan biosynthesis through complex formation with the cell wall precursor lipid II (1:1 molar ratio) thus inhibiting cell wall synthesis. The polypeptide is Fungal defensin oryzeasin (Aspergillus oryzae (strain ATCC 42149 / RIB 40) (Yellow koji mold)).